A 196-amino-acid polypeptide reads, in one-letter code: Large ribosomal subunit protein bL25 (196 aa).

The protein belongs to the bacterial ribosomal protein bL25 family. CTC subfamily. Part of the 50S ribosomal subunit; part of the 5S rRNA/L5/L18/L25 subcomplex. Contacts the 5S rRNA. Binds to the 5S rRNA independently of L5 and L18.

In terms of biological role, this is one of the proteins that binds to the 5S RNA in the ribosome where it forms part of the central protuberance. The protein is Large ribosomal subunit protein bL25 of Treponema pallidum subsp. pallidum (strain SS14).